We begin with the raw amino-acid sequence, 176 residues long: MASHVDPLVVGRVIGDVVDLFVPTTAMSVRFGTKDLTNGCEIKPSVAAAPPAVQIAGRVNELFALVMTDPDAPSPSEPTMREWLHWLVVNIPGGTDPSQGDVVVPYMGPRPPVGIHRYVMVLFQQKARVAAPPPDEDAARARFSTRAFADRHDLGLPVAALYFNAQKEPANRRRRY.

The protein belongs to the phosphatidylethanolamine-binding protein family.

Functionally, may form complexes with phosphorylated ligands by interfering with kinases and their effectors. In Oryza sativa subsp. japonica (Rice), this protein is Protein MOTHER of FT and TFL1 homolog 1.